The chain runs to 851 residues: ATP-dependent DNA helicase DDX31 (851 aa).

Residues 1–196 (MAPDLASQRH…STSDRNQEER (196 aa)) form a disordered region. The Q motif signature appears at 230-259 (AAFHELGLHPHLISTINTVLKMSSMTSVQK). The 182-residue stretch at 262–443 (IPVLLEGRDA…DISLHDPVSI (182 aa)) folds into the Helicase ATP-binding domain. ATP is bound at residue 275–282 (SQTGSGKT). Residues 388 to 391 (DEAD) carry the DEAD box motif. Residues 480–659 (SLKQHVTVVP…VSEIKMEDIL (180 aa)) enclose the Helicase C-terminal domain. Disordered regions lie at residues 762–784 (KKRKAHVKRPDLHKKTQSKHSLA) and 804–851 (KQNA…SQKV). Arginine 828 carries the omega-N-methylarginine modification. Over residues 841 to 851 (VQRDSKTSQKV) the composition is skewed to basic and acidic residues.

This sequence belongs to the DEAD box helicase family. DDX31/DBP7 subfamily. Interacts with NPM1; this interaction prevents interaction between NPM1 and HDM2. As to expression, weakly or undetectably expressed in normal organs. Up-regulated in renal cell carcinoma.

The protein localises to the nucleus. It localises to the nucleolus. The catalysed reaction is ATP + H2O = ADP + phosphate + H(+). Functionally, may have DNA helicase activity and RNA helicase activity. Probably have ssDNA and RNA dependent ATPase activity. Plays a role in ribosome biogenesis and TP53/p53 regulation through its interaction with NPM1. The chain is ATP-dependent DNA helicase DDX31 from Homo sapiens (Human).